The chain runs to 538 residues: Cytochrome P450 monooxygenase flvC (538 aa).

A helical transmembrane segment spans residues 17–37; sequence TVLIAGLLVYWVGSAIFLAVL. Position 478 (Cys-478) interacts with heme.

Belongs to the cytochrome P450 family. Requires heme as cofactor.

It is found in the membrane. The enzyme catalyses pre-flavunoidine + reduced [NADPH--hemoprotein reductase] + O2 = 10-hydroxy-pre-flavunoidine + oxidized [NADPH--hemoprotein reductase] + H2O + H(+). Its pathway is secondary metabolite biosynthesis; terpenoid biosynthesis. In terms of biological role, cytochrome P450 monooxygenase; part of the gene cluster that mediates the biosynthesis of flavunoidine, an alkaloidal terpenoid with a tetracyclic cage-like core connected to dimethylcadaverine via a C-N bond and acylated with 5,5-dimethyl-L-pipecolate. The tetracyclic core is synthesized by the terpene cyclase flvE and the cytochrome P450 monooxygenase flvD. The terpene cyclase flvE catalyzes the cyclization of farnesyl pyrophosphate (FPP) to form (1R,4R,5S)-(+)-acoradiene and the cytochrome P450 monooxygenase flvD is then responsible for oxidative conversion of (1R,4R,5S)-(+)-acoradiene into the tetracyclic cage present in the final product flavunoidine. In parallel, the N-methyltransferase flvH dimethylates L-lysine to give N,N-dimethyl-L-Lysin which is decarboxylated by flvG to afford dimethylcadaverine. The terpene cyclase-like protein flvF is the enzyme that attaches the dimethylcadaverine precusor at the C-7 of the tetracyclic cage to yield pre-flavunoidine. The cytochrome monooxygenase flvC hydroxylates the C-10 position of pre-flavunoidine whereas the NRPS flvI acylates the terpenoid core at the hydroxylated C-10 with dimethylpipecolate to yield final flavunoidine. The bifunctional enzyme flvA and the dehydrogenase flvB are responsible for the synthesis of the dimethylpipecolate precursor. The PLP-dependent lyase domain of flvA might use L-O-acetyl-homoserine and alpha-keto-isovalerate to form an intermediary ketone that can cyclize intramolecularly to yield an imine. The imine can be reduced by flvB to yield the 6-carboxylated pipecolate. The C-terminal alpha-KG-dependent oxygenase domain of flvA is then proposed to catalyze the decarboxylation to yield dimethylpipecolate. The chain is Cytochrome P450 monooxygenase flvC from Aspergillus flavus (strain ATCC 200026 / FGSC A1120 / IAM 13836 / NRRL 3357 / JCM 12722 / SRRC 167).